An 800-amino-acid polypeptide reads, in one-letter code: Putative antiporter subunit mnhA2 (800 aa).

A run of 21 helical transmembrane segments spans residues 1-21 (MSLV…LFTL), 29-49 (VAGY…IMKI), 78-98 (GLSL…FFYA), 109-129 (LPRF…IVIA), 133-153 (ILMY…ISYW), 167-187 (FMIT…LYII), 209-229 (FIPM…QFPF), 241-261 (TPVS…FLLF), 272-292 (VYIY…SLTA), 300-320 (GILA…VGLG), 336-356 (ILVL…KCAL), 387-407 (IVML…GFLS), 424-444 (YGFV…ILTF), 472-492 (PWLF…IFFV), 528-548 (VNLP…LALV), 595-615 (IMIT…TVGF), 627-647 (GPLE…LIFI), 651-671 (LTMV…FIAM), 676-696 (LALT…VSFS), 712-732 (TFKI…IFVA), and 768-788 (LDTM…YTLL).

This sequence belongs to the CPA3 antiporters (TC 2.A.63) subunit A family. In terms of assembly, may form a heterooligomeric complex that consists of seven subunits: mnhA2, mnhB2, mnhC2, mnhD2, mnhE2, mnhF2 and mnhG2.

Its subcellular location is the cell membrane. The polypeptide is Putative antiporter subunit mnhA2 (mnhA2) (Staphylococcus epidermidis (strain ATCC 12228 / FDA PCI 1200)).